The primary structure comprises 646 residues: Long-chain fatty acid transport protein 1 (646 aa).

Residues 1–13 (MRTPGAGTASVAS) lie on the Extracellular side of the membrane. A helical membrane pass occupies residues 14–34 (LGLLWLLGLPWTWSAAAAFGV). Over 35–646 (YVGSGGWRFL…ARICAGDFSL (612 aa)) the chain is Cytoplasmic. The tract at residues 191 to 475 (EVSEQLGKSL…YVSDSATNKK (285 aa)) is sufficient for oligomerization. 246-257 (YIYTSGTTGLPK) serves as a coordination point for AMP.

It belongs to the ATP-dependent AMP-binding enzyme family. Self-associates. May function as a homodimer. Interacts with EPRS1; mediates the translocation of SLC27A1 from the cytoplasm to the plasma membrane thereby increasing the uptake of long-chain fatty acids. Interacts with DGAT2 and this interaction is enhanced in the presence of ZFYVE1. Expressed in muscle.

It is found in the cell membrane. The protein resides in the endomembrane system. Its subcellular location is the cytoplasm. It catalyses the reaction a fatty acid(in) = a fatty acid(out). The catalysed reaction is (9Z)-octadecenoate(out) = (9Z)-octadecenoate(in). The enzyme catalyses hexadecanoate(out) = hexadecanoate(in). It carries out the reaction (5Z,8Z,11Z,14Z)-eicosatetraenoate(out) = (5Z,8Z,11Z,14Z)-eicosatetraenoate(in). It catalyses the reaction (9Z,12Z)-octadecadienoate(out) = (9Z,12Z)-octadecadienoate(in). The catalysed reaction is a long-chain fatty acid + ATP + CoA = a long-chain fatty acyl-CoA + AMP + diphosphate. The enzyme catalyses (5Z,8Z,11Z,14Z)-eicosatetraenoate + ATP + CoA = (5Z,8Z,11Z,14Z)-eicosatetraenoyl-CoA + AMP + diphosphate. It carries out the reaction a very long-chain fatty acid + ATP + CoA = a very long-chain fatty acyl-CoA + AMP + diphosphate. It catalyses the reaction tetracosanoate + ATP + CoA = tetracosanoyl-CoA + AMP + diphosphate. Inhibited by Triacsin C. Mediates the import of long-chain fatty acids (LCFA) into the cell by facilitating their transport at the plasma membrane. Also functions as an acyl-CoA ligase catalyzing the ATP-dependent formation of fatty acyl-CoA using LCFA and very-long-chain fatty acids (VLCFA) as substrates, which prevents fatty acid efflux from cells and might drive more fatty acid uptake. May act directly as a bona fide transporter, or alternatively, in a cytoplasmic or membrane-associated multimeric protein complex to trap and draw fatty acids towards accumulation. Plays a pivotal role in regulating available LCFA substrates from exogenous sources in tissues undergoing high levels of beta-oxidation or triglyceride synthesis. May be involved in regulation of cholesterol metabolism. Probably involved in fatty acid transport across the blood barrier. This Rattus norvegicus (Rat) protein is Long-chain fatty acid transport protein 1.